We begin with the raw amino-acid sequence, 535 residues long: Succinate-semialdehyde dehydrogenase, mitochondrial (535 aa).

A mitochondrion-targeting transit peptide spans 1–47 (MATCIWLRSCGARRLGWTFPGCRLRPRAGGLVPASGPAPGPAQLRCY). K126 is subject to N6-acetyllysine; alternate. K126 carries the post-translational modification N6-succinyllysine; alternate. Residues K135 and K184 each carry the N6-succinyllysine modification. NAD(+) is bound by residues R213 and 228–231 (KPAE). R213 contributes to the substrate binding site. K265 is modified (N6-acetyllysine; alternate). Position 265 is an N6-succinyllysine; alternate (K265). 284–289 (GSTTTG) serves as a coordination point for NAD(+). E306 (proton acceptor) is an active-site residue. R334 contributes to the substrate binding site. C340 functions as the Nucleophile in the catalytic mechanism. A disulfide bridge links C340 with C342. N6-acetyllysine is present on K365. K402 is subject to N6-succinyllysine. The residue at position 411 (K411) is an N6-acetyllysine. Residue S498 coordinates substrate. The residue at position 499 (S499) is a Phosphoserine.

The protein belongs to the aldehyde dehydrogenase family. In terms of assembly, homotetramer.

It is found in the mitochondrion. The catalysed reaction is succinate semialdehyde + NAD(+) + H2O = succinate + NADH + 2 H(+). It participates in amino-acid degradation; 4-aminobutanoate degradation. With respect to regulation, redox-regulated. Inhibited under oxydizing conditions. Its function is as follows. Catalyzes one step in the degradation of the inhibitory neurotransmitter gamma-aminobutyric acid (GABA). This chain is Succinate-semialdehyde dehydrogenase, mitochondrial (ALDH5A1), found in Pan paniscus (Pygmy chimpanzee).